Reading from the N-terminus, the 304-residue chain is ATP phosphoribosyltransferase (304 aa).

The protein belongs to the ATP phosphoribosyltransferase family. Long subfamily. The cofactor is Mg(2+).

Its subcellular location is the cytoplasm. It carries out the reaction 1-(5-phospho-beta-D-ribosyl)-ATP + diphosphate = 5-phospho-alpha-D-ribose 1-diphosphate + ATP. It participates in amino-acid biosynthesis; L-histidine biosynthesis; L-histidine from 5-phospho-alpha-D-ribose 1-diphosphate: step 1/9. Its activity is regulated as follows. Feedback inhibited by histidine. Functionally, catalyzes the condensation of ATP and 5-phosphoribose 1-diphosphate to form N'-(5'-phosphoribosyl)-ATP (PR-ATP). Has a crucial role in the pathway because the rate of histidine biosynthesis seems to be controlled primarily by regulation of HisG enzymatic activity. The chain is ATP phosphoribosyltransferase from Xanthomonas oryzae pv. oryzae (strain MAFF 311018).